The following is a 134-amino-acid chain: Antifungal protein ginkbilobin-2 (134 aa).

Positions 1-26 are cleaved as a signal peptide; the sequence is MKTMRMNSAFILAFALAAAMLILTEA. One can recognise a Gnk2-homologous domain in the interval 29 to 134; the sequence is TAFVSSACNT…CFIQYEQRSF (106 aa). Cystine bridges form between Cys-36/Cys-112, Cys-88/Cys-97, and Cys-100/Cys-125. Residue Asn-37 coordinates alpha-D-mannopyranose. Residues Arg-119 and Glu-130 each contribute to the alpha-D-mannopyranose site.

In terms of assembly, binds actin in vitro.

It localises to the secreted. Possesses antifungal activity against F.oxysporum, T.reesei and C.albicans. Weakly inhibits the aspartic acid protease pepsin activity. Exerts antifungal activity against S.cerevisiae and F.culmorum through its carbohydrate-binding specificity. Acts as a lectin that stricly recognizes alpha-1,2-linked mannose moieties and interacts with the yeast cell wall mannan polysaccharide. Can interfere with the fungal actin remodeling resulting to the activation of an actin-dependent cell death. The protein is Antifungal protein ginkbilobin-2 of Ginkgo biloba (Ginkgo).